The sequence spans 232 residues: MKLKIGIIGAMAQEIEILRKLMTDVSVLEIAGCKIYEGKINNTCVSLLQSGIGKVSAAMGTTLLLELTKPNMVINTGSAGGLAENLNVGDIVISTEVRHYDVDVTAFGYEIGQLPANPAAFLPNEQLVNMALKETKTAGVNAVAGLICSGDRFVNGAEQITTIRQHFDQVVAVEMEAAAIAQVCYAFEVPFVVVRAISDIADKCSHLSFEEFLPLAAEKSSEIVIAMLNNFS.

The Proton acceptor role is filled by glutamate 14. Substrate is bound by residues glycine 80, valine 154, and 175-176 (ME). Aspartate 199 serves as the catalytic Proton donor.

Belongs to the PNP/UDP phosphorylase family. MtnN subfamily.

It catalyses the reaction S-adenosyl-L-homocysteine + H2O = S-(5-deoxy-D-ribos-5-yl)-L-homocysteine + adenine. The catalysed reaction is S-methyl-5'-thioadenosine + H2O = 5-(methylsulfanyl)-D-ribose + adenine. The enzyme catalyses 5'-deoxyadenosine + H2O = 5-deoxy-D-ribose + adenine. Its pathway is amino-acid biosynthesis; L-methionine biosynthesis via salvage pathway; S-methyl-5-thio-alpha-D-ribose 1-phosphate from S-methyl-5'-thioadenosine (hydrolase route): step 1/2. In terms of biological role, catalyzes the irreversible cleavage of the glycosidic bond in both 5'-methylthioadenosine (MTA) and S-adenosylhomocysteine (SAH/AdoHcy) to adenine and the corresponding thioribose, 5'-methylthioribose and S-ribosylhomocysteine, respectively. Also cleaves 5'-deoxyadenosine, a toxic by-product of radical S-adenosylmethionine (SAM) enzymes, into 5-deoxyribose and adenine. The sequence is that of 5'-methylthioadenosine/S-adenosylhomocysteine nucleosidase from Haemophilus ducreyi (strain 35000HP / ATCC 700724).